We begin with the raw amino-acid sequence, 398 residues long: MQKDASLSGFLPSFQHFATQAIHVGQEPEQWNSRAVVLPISLATTFKQDFPGQSSGFEYSRSGNPTRNCLEKAVAALDGAKHSLAFASGLAATITITHLLKAGDEIICMDEVYGGTNRYFRRVASEFGLKISFVDCSKTKLLEAAITPQTKLVWIETPTNPTLKLADIGACAQIVHKRGDIILVVDNTFMSAYFQRPLALGADICMCSATKYMNGHSDVVMGLVSVNSDDLNSRLRFLQNSLGAVPSPFDCYLCCRGLKTLQVRMEKHFKNGMAVARFLETNPRVEKVVYPGLPSHPQHELAKRQCSGCPGMVSFYIKGALQHAKAFLKNLKLFTLAESLGGYESLAELPAIMTHASVPEKDRATLGINDTLIRLSVGLEDEQDLLEDLDRALKAAHP.

Residues Arg61, Tyr113, and Arg118 each contribute to the substrate site. The residue at position 211 (Lys211) is an N6-(pyridoxal phosphate)lysine. Residue Glu338 coordinates substrate.

It belongs to the trans-sulfuration enzymes family. In terms of assembly, homotetramer. Interacts with CALM in a calcium-dependent manner. It depends on pyridoxal 5'-phosphate as a cofactor. In terms of tissue distribution, detected in liver and kidney, and at lower levels in small intestine (at protein level). Highly expressed in liver, kidney and lung, detected at lower levels in stomach, small intestine and adipose tissue, and hardly found in heart, bone, and thymus.

The protein localises to the cytoplasm. It catalyses the reaction L,L-cystathionine + H2O = 2-oxobutanoate + L-cysteine + NH4(+). The catalysed reaction is L-cysteine + H2O = hydrogen sulfide + pyruvate + NH4(+) + H(+). The enzyme catalyses L-homocysteine + H2O = 2-oxobutanoate + hydrogen sulfide + NH4(+) + H(+). It carries out the reaction L-homoserine = 2-oxobutanoate + NH4(+). It catalyses the reaction L-selenocystathionine + H2O = L-selenocysteine + 2-oxobutanoate + NH4(+). It participates in amino-acid biosynthesis; L-cysteine biosynthesis; L-cysteine from L-homocysteine and L-serine: step 2/2. With respect to regulation, activated by calmodulin in the presence of calcium ions. Functionally, catalyzes the last step in the trans-sulfuration pathway from L-methionine to L-cysteine in a pyridoxal-5'-phosphate (PLP)-dependent manner, which consists on cleaving the L,L-cystathionine molecule into L-cysteine, ammonia and 2-oxobutanoate. Part of the L-cysteine derived from the trans-sulfuration pathway is utilized for biosynthesis of the ubiquitous antioxidant glutathione. Besides its role in the conversion of L-cystathionine into L-cysteine, it utilizes L-cysteine and L-homocysteine as substrates (at much lower rates than L,L-cystathionine) to produce hydrogen sulfide (H2S). In vitro, it converts two L-cysteine molecules into lanthionine and H2S, and two L-homocysteine molecules to homolanthionine and H2S, which can be particularly relevant under conditions of severe hyperhomocysteinemia. Lanthionine and homolanthionine are structural homologs of L,L-cystathionine that differ by the absence or presence of an extra methylene group, respectively. Acts as a cysteine-protein sulfhydrase by mediating sulfhydration of target proteins: sulfhydration consists of converting -SH groups into -SSH on specific cysteine residues of target proteins such as GAPDH, PTPN1 and NF-kappa-B subunit RELA, thereby regulating their function. By generating the gasotransmitter H2S, it participates in a number of physiological processes such as vasodilation, bone protection, and inflammation. Plays an essential role in myogenesis by contributing to the biogenesis of H2S in skeletal muscle tissue. Can also accept homoserine as substrate. Catalyzes the elimination of selenocystathionine (which can be derived from the diet) to yield selenocysteine, ammonia and 2-oxobutanoate. This chain is Cystathionine gamma-lyase (Cth), found in Mus musculus (Mouse).